We begin with the raw amino-acid sequence, 209 residues long: Dual specificity phosphatase 29 (209 aa).

Residues 44 to 193 enclose the Tyrosine-protein phosphatase domain; it reads NHVNEVWPNL…LRELDIQLAL (150 aa). 137–144 is a substrate binding site; it reads NCAMGRSR. The Phosphocysteine intermediate role is filled by Cys-138.

It belongs to the protein-tyrosine phosphatase family. Non-receptor class dual specificity subfamily.

The protein resides in the cytoplasm. Its subcellular location is the nucleus. It carries out the reaction O-phospho-L-tyrosyl-[protein] + H2O = L-tyrosyl-[protein] + phosphate. The enzyme catalyses O-phospho-L-seryl-[protein] + H2O = L-seryl-[protein] + phosphate. The catalysed reaction is O-phospho-L-threonyl-[protein] + H2O = L-threonyl-[protein] + phosphate. Its function is as follows. Dual specificity phosphatase able to dephosphorylate phosphotyrosine, phosphoserine and phosphothreonine residues within the same substrate, with a preference for phosphotyrosine as a substrate. Involved in the modulation of AMPK and MAPK1/2 signaling pathways. This chain is Dual specificity phosphatase 29 (dusp29), found in Xenopus tropicalis (Western clawed frog).